The chain runs to 346 residues: Immunoglobulin heavy constant alpha (346 aa).

Ig-like domains are found at residues 6 to 96, 118 to 212, and 221 to 323; these read PSIF…KSVD, PRLS…VSIT, and PQVH…KSID. A disulfide bond links Cys26 and Cys83. The N-linked (GlcNAc...) (complex) asparagine glycan is linked to Asn134. Intrachain disulfides connect Cys139/Cys196 and Cys243/Cys306. Asn333 carries an N-linked (GlcNAc...) (complex) asparagine glycan.

Immunoglobulins are composed of two identical heavy chains and two identical light chains; disulfide-linked. Monomeric or polymeric. Part of the secretory IgA (sIgA) complex that consists of two, four or five IgA monomers, and two additional non-Ig polypeptides, namely the JCHAIN and the secretory component (the proteolytic product of PIGR). Post-translationally, N-glycosylated. N-glycans attached to Asn-134 varies from differentially fucosylated complex and hybrid to sialylated with N-glycoyl neuraminic acid types: GlcNAc2Man3GlcNAc2(Fuc); GlcNAc1Man4GlcNAc2(Fuc); GlcNAc1Man4GlcNAc2; Gal1GlcNAc2Man3GlcNAc2(Fuc); GlcNAc2Man3GlcNAc2; Gal1GlcNAc2Man3GlcNAc2; GlcNAc1Man3GlcNAc2; GlcNAc1Man2GlcNAc2 and NeuGc1Gal1GlcNAc2Man3GlcNAc2(Fuc). N-glycans attached to Asn-333 are mainly fucosylated complex types: GlcNAc2Man3GlcNAc2; GlcNAc1Man3GlcNAc2; GlcNAc1Man3GlcNAc2(Fuc); GlcNAc2Man3GlcNAc2(Fuc); Gal1GlcNAc2Man3GlcNAc2(Fuc); NeuGc1Gal1GlcNAc1Man3GlcNAc2(Fuc); NeuGc1Gal1GlcNAc2Man3GlcNAc2(Fuc) and NeuAc1Gal1GlcNAc2Man3GlcNAc2(Fuc).

The protein resides in the secreted. Its subcellular location is the cell membrane. In terms of biological role, constant region of immunoglobulin heavy chains. Immunoglobulins, also known as antibodies, are membrane-bound or secreted glycoproteins produced by B lymphocytes. In the recognition phase of humoral immunity, the membrane-bound immunoglobulins serve as receptors which, upon binding of a specific antigen, trigger the clonal expansion and differentiation of B lymphocytes into immunoglobulins-secreting plasma cells. Secreted immunoglobulins mediate the effector phase of humoral immunity, which results in the elimination of bound antigens. The antigen binding site is formed by the variable domain of one heavy chain, together with that of its associated light chain. Thus, each immunoglobulin has two antigen binding sites with remarkable affinity for a particular antigen. The variable domains are assembled by a process called V-(D)-J rearrangement and can then be subjected to somatic hypermutations which, after exposure to antigen and selection, allow affinity maturation for a particular antigen. Ig alpha is the major immunoglobulin class in body secretions. This chain is Immunoglobulin heavy constant alpha (IGHA), found in Equus asinus (Donkey).